We begin with the raw amino-acid sequence, 366 residues long: MPRPILATVHTAALRHNLDRARRAAVDARVWAVVKANAYGHGIERVYEGLRGADGFALLDLAEAERVRALGWRGPVLLLEGVFDARDLELCSRLDLWHTVHCDEQIDMLAAHKTLKPQRVFLKMNSGMNRLGFAPERFGSAWTRLNALPQVDEISLMTHFSDADGARGIAHQLEVFERATHDLLGERSIANSAATLRHARQTRGDWVRPGIVLYGSAPDFPEHDAAHWQLQPTMTLSTKLIGIQTLKAGDTIGYGSNFTAEGPLTIGVAAVGYADGYPRHCNTGTPVLVNGVRTRMVGRVSMDMITVDLTPVPEAKFGTEVTLWGRSAVSGAVLPIDEVAQAAGTVGYELMCAVAPRVPFAPADGE.

K35 (proton acceptor; specific for D-alanine) is an active-site residue. K35 is modified (N6-(pyridoxal phosphate)lysine). Position 130 (R130) interacts with substrate. The active-site Proton acceptor; specific for L-alanine is Y254. Residue M302 participates in substrate binding.

This sequence belongs to the alanine racemase family. Pyridoxal 5'-phosphate is required as a cofactor.

The catalysed reaction is L-alanine = D-alanine. It participates in amino-acid biosynthesis; D-alanine biosynthesis; D-alanine from L-alanine: step 1/1. Catalyzes the interconversion of L-alanine and D-alanine. May also act on other amino acids. In Variovorax paradoxus (strain S110), this protein is Alanine racemase (alr).